We begin with the raw amino-acid sequence, 176 residues long: Large ribosomal subunit protein eL6 (176 aa).

A disordered region spans residues 1–27 (MSQVAPKWYQSEDVPAPKQTRKTARPQ).

It belongs to the eukaryotic ribosomal protein eL6 family. As to quaternary structure, component of the large ribosomal subunit. Mature ribosomes consist of a small (40S) and a large (60S) subunit. The 40S subunit contains about 32 different proteins and 1 molecule of RNA (18S). The 60S subunit contains 45 different proteins and 3 molecules of RNA (25S, 5.8S and 5S).

It is found in the cytoplasm. Its function is as follows. Component of the ribosome, a large ribonucleoprotein complex responsible for the synthesis of proteins in the cell. The small ribosomal subunit (SSU) binds messenger RNAs (mRNAs) and translates the encoded message by selecting cognate aminoacyl-transfer RNA (tRNA) molecules. The large subunit (LSU) contains the ribosomal catalytic site termed the peptidyl transferase center (PTC), which catalyzes the formation of peptide bonds, thereby polymerizing the amino acids delivered by tRNAs into a polypeptide chain. The nascent polypeptides leave the ribosome through a tunnel in the LSU and interact with protein factors that function in enzymatic processing, targeting, and the membrane insertion of nascent chains at the exit of the ribosomal tunnel. This chain is Large ribosomal subunit protein eL6, found in Candida albicans (strain SC5314 / ATCC MYA-2876) (Yeast).